Here is a 930-residue protein sequence, read N- to C-terminus: Xanthan lyase (930 aa).

A signal peptide spans 1 to 25 (MLSGILIAALLMTLWGGWQPDIAHA). Residues 146 to 148 (NWW), His246, Tyr255, Arg309, 313 to 315 (RSY), and Asn424 contribute to the xanthan site. Residue Tyr255 is the Proton donor/acceptor of the active site. Ca(2+)-binding residues include Asp515, Asp516, and Glu517. Arg612 is a binding site for xanthan. Ca(2+) is bound at residue Glu676.

Belongs to the polysaccharide lyase 8 family. In terms of assembly, monomer.

It is found in the secreted. The enzyme catalyses Eliminative cleavage of the terminal beta-D-mannosyl-(1-&gt;4)-beta-D-glucuronosyl linkage of the side-chain of the polysaccharide xanthan, leaving a 4-deoxy-alpha-L-threo-hex-4-enuronosyl group at the terminus of the side-chain.. Its activity is regulated as follows. Activated by Co(2+) at 1 mM. Completely inhibited by Hg(2+) but not affected by other divalent cations. Intensely inhibited by NaCl and KCl at 150 mM, in particular by the Na(+) and K(+) ions but not the Cl(-) ions. Partially inhibited by iodoacetamide and N-ethylmaleimide at 1 mM but not by dithiothreitol, reduced glutathione or 2-mercaptoethanol. Functionally, plays a role in xanthan depolymerization pathway by cleaving the linkage between the terminal mannosyl and glucuronyl residues of the side chain of xanthan to liberate pyruvylated mannose. Is highly specific for pyruvylated side-chains of xanthan and is not effective with hyaluronate, chondroitin A, gellan, heparin or pectin. This chain is Xanthan lyase, found in Bacillus sp. (strain GL1).